Consider the following 100-residue polypeptide: MEARDIILRPIVTEQSMAEMDNRKYTFEVALHATKPQVRKAVEEIFGVKVVNVNIANVRGKKKRQGRYEGMTRRRRKALIALSADSKEIKIFADEDNDKK.

The protein belongs to the universal ribosomal protein uL23 family. In terms of assembly, part of the 50S ribosomal subunit. Contacts protein L29, and trigger factor when it is bound to the ribosome.

Functionally, one of the early assembly proteins it binds 23S rRNA. One of the proteins that surrounds the polypeptide exit tunnel on the outside of the ribosome. Forms the main docking site for trigger factor binding to the ribosome. This is Large ribosomal subunit protein uL23 from Lacticaseibacillus casei (strain BL23) (Lactobacillus casei).